The following is a 588-amino-acid chain: Pleckstrin homology domain-containing family A member 4 (588 aa).

The region spanning 54–153 (PVHIRGWLHK…WLRALGRASR (100 aa)) is the PH domain. Disordered stretches follow at residues 155–349 (EGED…QASM) and 495–588 (AGLG…VDHL). Position 164 is a phosphoserine (S164). The segment covering 183–193 (VNRREEGRISE) has biased composition (basic and acidic residues). Over residues 211–222 (TPNSTVDLQTDT) the composition is skewed to polar residues. Low complexity-rich tracts occupy residues 246–260 (PRPR…PLSA) and 321–334 (QRTQ…GSST). Position 562 is a phosphoserine (S562).

The protein resides in the cytoplasm. It is found in the membrane. In terms of biological role, binds specifically to phosphatidylinositol 3-phosphate (PtdIns3P), but not to other phosphoinositides. This chain is Pleckstrin homology domain-containing family A member 4 (Plekha4), found in Mus musculus (Mouse).